Here is a 386-residue protein sequence, read N- to C-terminus: Protein lin-8 (386 aa).

The segment at 175–285 (LGLEARRASK…FSQQYGGGGS (111 aa)) is sufficient for interaction with lin-35. The interval 212 to 240 (EEPYEETGSNWSDPAPEPSQSKSQSPEAK) is disordered. The segment covering 229 to 240 (PSQSKSQSPEAK) has biased composition (low complexity).

It belongs to the lin-8 family. As to quaternary structure, interacts with lin-35 (via C-terminus). Widely expressed throughout development, with particularly prominent expression in the germline and in neuronal nuclei of the head (at protein level).

Its subcellular location is the nucleus. Acts as a synthetic multivulva class A (synMuvA) protein and redundantly inhibits lin-3/EGF expression to prevent inappropriate vulva induction. This chain is Protein lin-8, found in Caenorhabditis elegans.